The sequence spans 322 residues: Cytochrome c biogenesis protein CcsA (322 aa).

8 helical membrane passes run 6-26 (LQLILETFSFFIYFILTFLFF), 45-65 (LIANVSIFLLLITRWITAGYF), 69-89 (NLYESLFFLVWGLNTIWLFLY), 97-117 (LLDNSVSLLLTLLVGFLHFIL), 144-164 (MISYATLMIGSLLSIIYLYFL), 230-250 (LITFGFPLLTIGIIAGAVWAN), 265-285 (WALITWLIFAIYLHTRIIKGW), and 291-311 (AMVASLGFFIIWICYLGVNLL).

It belongs to the CcmF/CycK/Ccl1/NrfE/CcsA family. In terms of assembly, may interact with Ccs1.

The protein localises to the plastid. It is found in the cyanelle thylakoid membrane. Functionally, required during biogenesis of c-type cytochromes (cytochrome c6 and cytochrome f) at the step of heme attachment. The chain is Cytochrome c biogenesis protein CcsA from Cyanophora paradoxa.